The primary structure comprises 419 residues: Enolase (419 aa).

Glutamine 161 lines the (2R)-2-phosphoglycerate pocket. Glutamate 205 functions as the Proton donor in the catalytic mechanism. Residues aspartate 240, glutamate 283, and aspartate 309 each contribute to the Mg(2+) site. (2R)-2-phosphoglycerate contacts are provided by lysine 334, arginine 363, serine 364, and lysine 385. The active-site Proton acceptor is the lysine 334.

This sequence belongs to the enolase family. Mg(2+) serves as cofactor.

It localises to the cytoplasm. Its subcellular location is the secreted. It is found in the cell surface. The catalysed reaction is (2R)-2-phosphoglycerate = phosphoenolpyruvate + H2O. It participates in carbohydrate degradation; glycolysis; pyruvate from D-glyceraldehyde 3-phosphate: step 4/5. Functionally, catalyzes the reversible conversion of 2-phosphoglycerate (2-PG) into phosphoenolpyruvate (PEP). It is essential for the degradation of carbohydrates via glycolysis. This chain is Enolase, found in Saccharolobus islandicus (strain L.S.2.15 / Lassen #1) (Sulfolobus islandicus).